Reading from the N-terminus, the 429-residue chain is uncharacterized protein (429 aa).

Catalysis depends on charge relay system residues Ser116, Asp179, and His206.

The protein belongs to the AB hydrolase 3 family.

It is found in the cytoplasm. The protein localises to the nucleus. This is an uncharacterized protein from Schizosaccharomyces pombe (strain 972 / ATCC 24843) (Fission yeast).